The sequence spans 218 residues: Thiopurine S-methyltransferase (218 aa).

S-adenosyl-L-methionine-binding residues include W10, L45, E66, and R123.

Belongs to the class I-like SAM-binding methyltransferase superfamily. TPMT family.

It is found in the cytoplasm. It catalyses the reaction S-adenosyl-L-methionine + a thiopurine = S-adenosyl-L-homocysteine + a thiopurine S-methylether.. The polypeptide is Thiopurine S-methyltransferase (Shewanella loihica (strain ATCC BAA-1088 / PV-4)).